A 133-amino-acid chain; its full sequence is FK506-binding protein 2 (133 aa).

The signal sequence occupies residues 1 to 20; it reads MKLLYCLLLVILALVGLSSG. A PPIase FKBP-type domain is found at 45–133; it reads GDKLKIHYTG…IFDVELIGIN (89 aa).

The protein belongs to the FKBP-type PPIase family.

It carries out the reaction [protein]-peptidylproline (omega=180) = [protein]-peptidylproline (omega=0). With respect to regulation, inhibited by both FK506 and rapamycin. In terms of biological role, PPIases accelerate the folding of proteins by catalyzing the cis-trans isomerization of proline imidic peptide bonds in oligopeptides. In Dictyostelium discoideum (Social amoeba), this protein is FK506-binding protein 2 (fkbp2).